The primary structure comprises 289 residues: Nodulation protein NolT (289 aa).

A signal peptide spans 1 to 33 (MFGSAHGDTTSSDTSGRRPLRLVVLPLLLALSS). The N-palmitoyl cysteine moiety is linked to residue Cys-34. Cys-34 is lipidated: S-diacylglycerol cysteine. A helical transmembrane segment spans residues 233–253 (VAVGVSAAVFAVTCYLLFIVL).

Belongs to the YscJ lipoprotein family.

The protein localises to the cell outer membrane. The chain is Nodulation protein NolT (nolT) from Sinorhizobium fredii (strain NBRC 101917 / NGR234).